A 414-amino-acid polypeptide reads, in one-letter code: MRVSVLSIGDELLCGEVVDTNASHIAGRLFQAGGRVERHLTVPDDAEAIVRALTELGARSEAVIVTGGLGPTPDDLTAEAAARAAGTELELSTEALTHLERFAQRITGELHPANRRQALLPSGCRLIPNPLGTALGFVVRIGCADCFFMPGVPFEMERMLEETVLPELRNRFPAGWQRVTLKLFGIAEAAIAELLEGAIPEGSRVQLAYCVKFPEIHLILRASATDAPALQQAAGELRRRLGAYLFAEDREEMDDRLALLLRESGLTLALAESCTGGMIAARITAVAGSSAYFLEGNVTYSNEAKTRMLQVPPPLIAEHGAVSAEVARAMAVGAREAAGSDLALSVTGIAGPDGGTLEKPVGTVYLALADQGSCRVERFNFQGDRDRVRCITCFTALNWLQSYLLTRKTTPGRG.

It belongs to the CinA family.

This chain is CinA-like protein, found in Geobacter sp. (strain M21).